We begin with the raw amino-acid sequence, 353 residues long: Stearoyl-CoA desaturase 4 (353 aa).

A disordered region spans residues 1 to 42 (MTAHLPQEISSRCSTTNIMEPHSRRQQDGEEKMPLQAEDIRP). Residues 1 to 66 (MTAHLPQEIS…EGPPPKLEYV (66 aa)) lie on the Cytoplasmic side of the membrane. Residues 8–18 (EISSRCSTTNI) show a composition bias toward polar residues. The segment covering 21-42 (PHSRRQQDGEEKMPLQAEDIRP) has biased composition (basic and acidic residues). A helical transmembrane segment spans residues 67–87 (WRNIIFMALLHVGALYGITLV). Residue N69 participates in substrate binding. The Lumenal portion of the chain corresponds to 88 to 91 (PSCK). A helical membrane pass occupies residues 92–112 (VYTWLLGVFYNVVAGLGITAG). Residues 113 to 211 (AHRLWSHRTY…EKLVMFQRRY (99 aa)) lie on the Cytoplasmic side of the membrane. The Fe cation site is built by H114 and H119. The Histidine box-1 signature appears at 114–119 (HRLWSH). Residues N142, R149, and D150 each coordinate substrate. Fe cation contacts are provided by H151, H154, and H155. The Histidine box-2 motif lies at 151–155 (HRAHH). Residues R182 and K183 each coordinate substrate. A helical transmembrane segment spans residues 212–231 (YKLAVTLMFIILPTLVPWYL). Residues 232–235 (WGET) are Lumenal-facing. The chain crosses the membrane as a helical span at residues 236 to 257 (FQHSLCVSNFLRYAVLLNFTWL). W256 is a substrate binding site. Residues 258–353 (VNSAAHLYGY…RTGDGSHKSS (96 aa)) lie on the Cytoplasmic side of the membrane. Residues H263, H292, H295, and H296 each coordinate Fe cation. A Histidine box-3 motif is present at residues 292-296 (HNYHH).

It belongs to the fatty acid desaturase type 1 family. Requires Fe(2+) as cofactor. In terms of tissue distribution, detected in heart, but not in brain, liver, skin or adipose tissue.

It localises to the endoplasmic reticulum membrane. It is found in the microsome membrane. The catalysed reaction is octadecanoyl-CoA + 2 Fe(II)-[cytochrome b5] + O2 + 2 H(+) = (9Z)-octadecenoyl-CoA + 2 Fe(III)-[cytochrome b5] + 2 H2O. The enzyme catalyses hexadecanoyl-CoA + 2 Fe(II)-[cytochrome b5] + O2 + 2 H(+) = (9Z)-hexadecenoyl-CoA + 2 Fe(III)-[cytochrome b5] + 2 H2O. Its function is as follows. Stearoyl-CoA desaturase that utilizes O(2) and electrons from reduced cytochrome b5 to introduce the first double bond into saturated fatty acyl-CoA substrates. Catalyzes the insertion of a cis double bond at the delta-9 position into fatty acyl-CoA substrates including palmitoyl-CoA and stearoyl-CoA. Required for the biosynthesis of membrane phospholipids, cholesterol esters and triglycerides. The chain is Stearoyl-CoA desaturase 4 from Mus musculus (Mouse).